The primary structure comprises 259 residues: NADP-dependent 3-hydroxy acid dehydrogenase (259 aa).

NADP(+) is bound at residue Ile11. A Phosphoserine modification is found at Ser42. Position 43 is a phosphothreonine (Thr43). NADP(+) contacts are provided by Asp65, Asn92, Arg126, Tyr158, Lys162, and Val191. The Proton acceptor role is filled by Tyr158. Residue Lys162 is the Lowers pKa of active site Tyr of the active site.

Belongs to the short-chain dehydrogenases/reductases (SDR) family. As to quaternary structure, homotetramer.

It localises to the cytoplasm. The protein localises to the nucleus. It carries out the reaction L-allo-threonine + NADP(+) = aminoacetone + CO2 + NADPH. NADP-dependent dehydrogenase with broad substrate specificity acting on 3-hydroxy acids. Catalyzes the NADP-dependent oxidation of L-allo-threonine to L-2-amino-3-keto-butyrate, which is spontaneously decarboxylated into aminoacetone. Also acts on D-threonine, L-serine, D-serine, D-3-hydroxyisobutyrate, L-3-hydroxyisobutyrate, D-glycerate and L-glycerate. The protein is NADP-dependent 3-hydroxy acid dehydrogenase of Schizosaccharomyces pombe (strain 972 / ATCC 24843) (Fission yeast).